The sequence spans 187 residues: Serine/arginine-rich splicing factor RSZ21 (187 aa).

The region spanning 2 to 73 is the RRM domain; the sequence is TRVYVGNLDP…WRVELSHKDK (72 aa). Disordered stretches follow at residues 68 to 89 and 105 to 187; these read LSHKDKGGRGGGGGRRGGIEDS and RRGR…ANGV. Residues 89 to 106 form a CCHC-type zinc finger; that stretch reads SKCYECGELGHFARECRR. A compositionally biased stretch (basic residues) spans 107-122; it reads GRGSVRRRSPSPRRRR. Phosphoserine occurs at positions 123, 132, 134, 140, 146, and 159. The span at 136 to 155 shows a compositional bias: basic residues; the sequence is RGRRSPPRRRSVTPPRRGRS. A compositionally biased stretch (basic and acidic residues) spans 165–177; that stretch reads SRRDSPRRRDSPY. The segment covering 178 to 187 has biased composition (low complexity); sequence GRRSPYANGV. Position 181 is a phosphoserine (S181).

The protein belongs to the splicing factor SR family. RSZ subfamily. In terms of assembly, component of the spliceosome. Interacts with SNRNP35, AFC2, CYP59, RS2Z33 and RNU1. Interacts with MOS14. In terms of processing, extensively phosphorylated on serine residues in the RS domain. Phosphorylated by AFC2. Expressed in roots, leaves, flowers and siliques.

It localises to the nucleus speckle. Its function is as follows. Probably involved in intron recognition and spliceosome assembly. The protein is Serine/arginine-rich splicing factor RSZ21 (RSZ21) of Arabidopsis thaliana (Mouse-ear cress).